A 452-amino-acid polypeptide reads, in one-letter code: Protein henna (452 aa).

The ACT domain occupies 36–107; it reads FSPKDSSLSS…EQCSYFNIIS (72 aa). A Phosphoserine; by CaMK2 modification is found at serine 272. The Fe cation site is built by histidine 284, histidine 289, and glutamate 329.

This sequence belongs to the biopterin-dependent aromatic amino acid hydroxylase family. It depends on Fe(2+) as a cofactor. In terms of tissue distribution, phenylalanine hydrolase activity is found in yolk granules of embryos, and female abdomen and fat body tissues. Tryptophan hydroxylase is expressed in serotonergic neurons. Both enzymes are present in cuticular tissues.

The enzyme catalyses (6R)-L-erythro-5,6,7,8-tetrahydrobiopterin + L-phenylalanine + O2 = (4aS,6R)-4a-hydroxy-L-erythro-5,6,7,8-tetrahydrobiopterin + L-tyrosine. It carries out the reaction (6R)-L-erythro-5,6,7,8-tetrahydrobiopterin + L-tryptophan + O2 = 5-hydroxy-L-tryptophan + (4aS,6R)-4a-hydroxy-L-erythro-5,6,7,8-tetrahydrobiopterin. The protein operates within amino-acid degradation; L-phenylalanine degradation; acetoacetate and fumarate from L-phenylalanine: step 1/6. Its activity is regulated as follows. N-terminal region of PAH is thought to contain allosteric binding sites for phenylalanine and to constitute an 'inhibitory' domain that regulates the activity of a catalytic domain in the C-terminal portion of the molecule. This Drosophila melanogaster (Fruit fly) protein is Protein henna (Hn).